The following is a 498-amino-acid chain: Protein DETOXIFICATION 30 (498 aa).

The next 12 membrane-spanning stretches (helical) occupy residues 64–86 (YSLG…AAVS), 91–111 (VIAG…ETLC), 136–156 (VTAV…AFIG), 161–181 (ISSA…AYAV), 197–217 (VMAA…WFVI), 227–247 (LAVV…VYIF), 277–297 (AVML…AGYL), 302–322 (ISVA…MIAI), 349–369 (LVAV…LLIF), 393–413 (ILAV…VAVG), 419–439 (VVAY…GLLL), and 447–467 (VMGI…VLTW).

This sequence belongs to the multi antimicrobial extrusion (MATE) (TC 2.A.66.1) family.

Its subcellular location is the membrane. In Arabidopsis thaliana (Mouse-ear cress), this protein is Protein DETOXIFICATION 30.